A 465-amino-acid chain; its full sequence is Pancreatic triacylglycerol lipase (465 aa).

Positions 1 to 16 (MLLVWSLALLLGAVAG) are cleaved as a signal peptide. 2 cysteine pairs are disulfide-bonded: Cys-20-Cys-26 and Cys-107-Cys-118. Ser-169 serves as the catalytic Nucleophile. Catalysis depends on Asp-193, which acts as the Charge relay system. Ca(2+) is bound by residues Glu-204, Arg-207, Asp-209, and Asp-212. The cysteines at positions 254 and 278 are disulfide-linked. Catalysis depends on His-280, which acts as the Charge relay system. Intrachain disulfides connect Cys-302–Cys-313, Cys-316–Cys-321, and Cys-449–Cys-465. The PLAT domain occupies 355-465 (WRYKVSVTLS…EDVLLTLNAC (111 aa)).

This sequence belongs to the AB hydrolase superfamily. Lipase family. Forms a 1:1 stoichiometric complex with (pro)colipase/CLPS. As to expression, expressed in many tissues with highest expression in liver. During hibernation there is a significant increases in expression in heart, white adipose tissue (WAT), and testis; but not in pancreas.

The protein resides in the secreted. It carries out the reaction a triacylglycerol + H2O = a diacylglycerol + a fatty acid + H(+). The catalysed reaction is 1,2,3-tributanoylglycerol + H2O = dibutanoylglycerol + butanoate + H(+). The enzyme catalyses 1,2,3-tri-(9Z-octadecenoyl)-glycerol + H2O = di-(9Z)-octadecenoylglycerol + (9Z)-octadecenoate + H(+). It catalyses the reaction all-trans-retinyl hexadecanoate + H2O = all-trans-retinol + hexadecanoate + H(+). It carries out the reaction 1,2-di-(9Z-octadecenoyl)-glycerol + H2O = (9Z-octadecenoyl)-glycerol + (9Z)-octadecenoate + H(+). Its activity is regulated as follows. Inhibited by bile salts, is reactivated by (pro)colipase/CLPS. In terms of biological role, plays an important role in fat metabolism. It preferentially splits the esters of long-chain fatty acids at positions 1 and 3, producing mainly 2-monoacylglycerol and free fatty acids, and shows considerably higher activity against insoluble emulsified substrates than against soluble ones. Plays a role in hibernation as a key enzyme that shows high activity at low temperatures. When expressed in the hibernating heart it liberates fatty acids from triglycerides at temperatures as low as 0 degrees Celsius. The polypeptide is Pancreatic triacylglycerol lipase (PNLIP) (Ictidomys tridecemlineatus (Thirteen-lined ground squirrel)).